Here is a 397-residue protein sequence, read N- to C-terminus: Succinate--CoA ligase [ADP-forming] subunit beta (397 aa).

The region spanning Lys9 to Glu254 is the ATP-grasp domain. ATP contacts are provided by residues Lys46, Gly53–Gly55, Glu109, Ala112, and Glu117. Residues Asn209 and Asp223 each coordinate Mg(2+). Residues Asn274 and Gly331–Met333 each bind substrate.

Belongs to the succinate/malate CoA ligase beta subunit family. Heterotetramer of two alpha and two beta subunits. The cofactor is Mg(2+).

The catalysed reaction is succinate + ATP + CoA = succinyl-CoA + ADP + phosphate. It catalyses the reaction GTP + succinate + CoA = succinyl-CoA + GDP + phosphate. It participates in carbohydrate metabolism; tricarboxylic acid cycle; succinate from succinyl-CoA (ligase route): step 1/1. Succinyl-CoA synthetase functions in the citric acid cycle (TCA), coupling the hydrolysis of succinyl-CoA to the synthesis of either ATP or GTP and thus represents the only step of substrate-level phosphorylation in the TCA. The beta subunit provides nucleotide specificity of the enzyme and binds the substrate succinate, while the binding sites for coenzyme A and phosphate are found in the alpha subunit. This Rhizobium etli (strain CIAT 652) protein is Succinate--CoA ligase [ADP-forming] subunit beta.